A 122-amino-acid chain; its full sequence is T-cell receptor beta chain V region C5 (122 aa).

A signal peptide spans I1 to H7. Positions M8–G103 are v segment. C31 and C99 are oxidised to a cystine. A d segment region spans residues T104–L108. A j segment region spans residues D109 to L122.

This is T-cell receptor beta chain V region C5 from Mus musculus (Mouse).